The following is a 777-amino-acid chain: Acyl-homoserine lactone acylase PvdQ (777 aa).

A signal peptide spans 1–25 (MIISRQLPSFCLAALFLSFSGGAHA). Residues 196 to 218 (AGLPAEHWQLAAARQQRFALDRG) constitute a propeptide, spacer peptide. The active-site Nucleophile is S219.

It belongs to the peptidase S45 family. As to quaternary structure, heterodimer of an alpha subunit and a beta subunit processed from the same precursor.

It localises to the periplasm. It catalyses the reaction an N-acyl-L-homoserine lactone + H2O = L-homoserine lactone + a carboxylate. In terms of biological role, catalyzes the deacylation of acyl-homoserine lactone (AHL or acyl-HSL), releasing homoserine lactone (HSL) and the corresponding fatty acid. Possesses a specificity for the degradation of long-chain acyl-HSLs (side chains of 11 to 14 carbons in length). The protein is Acyl-homoserine lactone acylase PvdQ (pvdQ) of Pseudomonas fluorescens (strain ATCC BAA-477 / NRRL B-23932 / Pf-5).